An 85-amino-acid chain; its full sequence is Makatoxin-2 (85 aa).

Residues 1 to 19 form the signal peptide; that stretch reads MNYLIVISFALLLMTSVES. The LCN-type CS-alpha/beta domain occupies 21–83; that stretch reads RDAYIADSEN…VPIRIPGPCR (63 aa). Intrachain disulfides connect cysteine 31–cysteine 82, cysteine 35–cysteine 55, cysteine 41–cysteine 65, and cysteine 45–cysteine 67.

The protein belongs to the long (4 C-C) scorpion toxin superfamily. Sodium channel inhibitor family. Alpha subfamily. Expressed by the venom gland.

It is found in the secreted. This protein markedly relaxes the rat carbachol-precontracted anococcygeus muscle. This relaxation is inhibited by the inhibitor of nitric oxide (NO) synthase, N-nitro-L-arginine methyl ester (L-NAME), suggesting that the response induced by this protein is NO-mediated. The polypeptide is Makatoxin-2 (Olivierus martensii (Manchurian scorpion)).